The primary structure comprises 242 residues: U1 small nuclear ribonucleoprotein C (242 aa).

The Matrin-type; degenerate zinc-finger motif lies at 3-35 (YLGDYCDVYLTHDSMSVRKAHNSGRNHLRNVVE). The segment at 60-242 (GQASSNPMLQ…SSPGPSQEGK (183 aa)) is disordered. Pro residues-rich tracts occupy residues 90-107 (MLPP…PGAP), 136-149 (PPMP…PLPN), 156-183 (PFPP…PPIP), and 201-213 (PVPP…PGAP). The span at 231–242 (PASSPGPSQEGK) shows a compositional bias: polar residues.

Belongs to the U1 small nuclear ribonucleoprotein C family. U1 snRNP is composed of the 7 core Sm proteins B/B', D1, D2, D3, E, F and G that assemble in a heptameric protein ring on the Sm site of the small nuclear RNA to form the core snRNP, and at least 3 U1 snRNP-specific proteins U1-70K, U1-A and U1-C. U1-C interacts with U1 snRNA and the 5' splice-site region of the pre-mRNA.

It localises to the nucleus. In terms of biological role, component of the spliceosomal U1 snRNP, which is essential for recognition of the pre-mRNA 5' splice-site and the subsequent assembly of the spliceosome. U1-C is directly involved in initial 5' splice-site recognition for both constitutive and regulated alternative splicing. The interaction with the 5' splice-site seems to precede base-pairing between the pre-mRNA and the U1 snRNA. Stimulates commitment or early (E) complex formation by stabilizing the base pairing of the 5' end of the U1 snRNA and the 5' splice-site region. In Ajellomyces capsulatus (strain G186AR / H82 / ATCC MYA-2454 / RMSCC 2432) (Darling's disease fungus), this protein is U1 small nuclear ribonucleoprotein C.